The primary structure comprises 113 residues: U11-theraphotoxin-Hhn1t (113 aa).

An N-terminal signal peptide occupies residues 1–21; that stretch reads MNTVRVTFLLVFVLAVSLGQA. Residues 22-74 constitute a propeptide that is removed on maturation; the sequence is DKDENRMEMQEKTEQGKSYLDFAENLLLQKLEELEAKLLEEDSEESRNSRQKR. Residues 60 to 69 are compositionally biased toward basic and acidic residues; sequence LEEDSEESRN. Residues 60–83 form a disordered region; sequence LEEDSEESRNSRQKRCIGEGVPCD. 3 disulfide bridges follow: cysteine 75–cysteine 90, cysteine 82–cysteine 95, and cysteine 89–cysteine 110.

This sequence belongs to the neurotoxin 14 (magi-1) family. 01 (HNTX-16) subfamily. In terms of tissue distribution, expressed by the venom gland.

The protein localises to the secreted. In terms of biological role, probable ion channel inhibitor. The sequence is that of U11-theraphotoxin-Hhn1t from Cyriopagopus hainanus (Chinese bird spider).